The following is a 359-amino-acid chain: Oxopyrrolidines biosynthesis cluster protein G (359 aa).

Residues 1–32 (MDHLRDSLLSSLPRDSPSIGAMDYARRDREST) are disordered. The span at 7–18 (SLLSSLPRDSPS) shows a compositional bias: low complexity.

In terms of biological role, part of the gene cluster that mediates the biosynthesis of oxopyrrolidines, polyketide-amino acid hybrid compounds with feature structures of tetramic acid. Does not seem to play a role in oxopyrrolidines A and B biosynthesis. This Penicillium oxalicum (strain 114-2 / CGMCC 5302) (Penicillium decumbens) protein is Oxopyrrolidines biosynthesis cluster protein G.